Here is a 234-residue protein sequence, read N- to C-terminus: 2-phospho-L-lactate guanylyltransferase (234 aa).

Belongs to the CofC family. As to quaternary structure, homodimer.

The catalysed reaction is (2S)-2-phospholactate + GTP + H(+) = (2S)-lactyl-2-diphospho-5'-guanosine + diphosphate. The protein operates within cofactor biosynthesis; coenzyme F420 biosynthesis. Guanylyltransferase that catalyzes the activation of (2S)-2-phospholactate (2-PL) as (2S)-lactyl-2-diphospho-5'-guanosine, via the condensation of 2-PL with GTP. It is involved in the biosynthesis of coenzyme F420, a hydride carrier cofactor. The polypeptide is 2-phospho-L-lactate guanylyltransferase (Methanobrevibacter ruminantium (strain ATCC 35063 / DSM 1093 / JCM 13430 / OCM 146 / M1) (Methanobacterium ruminantium)).